The sequence spans 256 residues: Thiazole synthase (256 aa).

K96 serves as the catalytic Schiff-base intermediate with DXP. 1-deoxy-D-xylulose 5-phosphate contacts are provided by residues G157, 183-184 (AG), and 205-206 (NT).

The protein belongs to the ThiG family. In terms of assembly, homotetramer. Forms heterodimers with either ThiH or ThiS.

The protein resides in the cytoplasm. It carries out the reaction [ThiS sulfur-carrier protein]-C-terminal-Gly-aminoethanethioate + 2-iminoacetate + 1-deoxy-D-xylulose 5-phosphate = [ThiS sulfur-carrier protein]-C-terminal Gly-Gly + 2-[(2R,5Z)-2-carboxy-4-methylthiazol-5(2H)-ylidene]ethyl phosphate + 2 H2O + H(+). Its pathway is cofactor biosynthesis; thiamine diphosphate biosynthesis. Its function is as follows. Catalyzes the rearrangement of 1-deoxy-D-xylulose 5-phosphate (DXP) to produce the thiazole phosphate moiety of thiamine. Sulfur is provided by the thiocarboxylate moiety of the carrier protein ThiS. In vitro, sulfur can be provided by H(2)S. The chain is Thiazole synthase from Bacillus mycoides (strain KBAB4) (Bacillus weihenstephanensis).